Here is a 148-residue protein sequence, read N- to C-terminus: Isotocin-neurophysin IT 2 (148 aa).

The first 20 residues, 1–20, serve as a signal peptide directing secretion; sequence MSGSMSSVFSLLYLLSVCSA. Cysteines 21 and 26 form a disulfide. A Glycine amide modification is found at Gly29. 7 disulfides stabilise this stretch: Cys42-Cys86, Cys45-Cys59, Cys53-Cys76, Cys60-Cys66, Cys93-Cys105, Cys99-Cys117, and Cys106-Cys111.

The protein belongs to the vasopressin/oxytocin family.

Isotocin causes contraction of smooth muscles. The chain is Isotocin-neurophysin IT 2 from Catostomus commersonii (White sucker).